The following is a 56-amino-acid chain: Cruciferin (56 aa).

T45 carries the phosphothreonine modification.

It belongs to the 11S seed storage protein (globulins) family. Hexamer; each subunit is composed of an acidic and a basic chain derived from a single precursor and linked by a disulfide bond.

Functionally, this is a seed storage protein. The sequence is that of Cruciferin from Sinapis alba (White mustard).